The following is a 368-amino-acid chain: C2H2 type master regulator of conidiophore development BrlA (368 aa).

Residues Cys-268–Phe-292 form a C2H2-type 1; degenerate zinc finger. Residues Phe-300 to His-323 form a C2H2-type 2 zinc finger. The interval Ala-338–Tyr-368 is disordered. Basic and acidic residues predominate over residues Lys-359 to Tyr-368.

It is found in the nucleus. Its function is as follows. BrlA, abaA and wetA are pivotal regulators of conidiophore development and conidium maturation. They act individually and together to regulate their own expression and that of numerous other sporulation-specific genes. BrlA, abaA and wetA act together to positively regulate the expression of the Pks1 gene cluster that mediates the biosynthesis of an anthraquinone derivative pigment that contributes to conidial pigmentation that provides protection from UV radiation, heat and cold stress. The sequence is that of C2H2 type master regulator of conidiophore development BrlA from Metarhizium robertsii (strain ARSEF 23 / ATCC MYA-3075) (Metarhizium anisopliae (strain ARSEF 23)).